A 194-amino-acid polypeptide reads, in one-letter code: AP-3 complex subunit sigma (194 aa).

Belongs to the adaptor complexes small subunit family. Adaptor protein complex 3 (AP-3) is a heterotetramer composed of 2 large adaptins (APL5 and APL6), a medium adaptin (APM3) and a small adaptin (APS3).

The protein localises to the golgi apparatus. The protein resides in the cytoplasmic vesicle membrane. Functionally, part of the AP-3 complex, an adaptor-related complex which is not clathrin-associated. The complex is associated with the Golgi region as well as more peripheral structures. It facilitates the budding of vesicles from the Golgi membrane and may be directly involved in trafficking to the vacuole. Required for the transport via the ALP pathway, which directs the transport of the cargo proteins PHO8 and VAM3 to the vacuole. This chain is AP-3 complex subunit sigma (APS3), found in Saccharomyces cerevisiae (strain ATCC 204508 / S288c) (Baker's yeast).